The chain runs to 366 residues: UDP-N-acetylglucosamine--N-acetylmuramyl-(pentapeptide) pyrophosphoryl-undecaprenol N-acetylglucosamine transferase (366 aa).

UDP-N-acetyl-alpha-D-glucosamine is bound by residues 14 to 16 (TGG), Asn-128, Arg-169, Ser-201, Ile-251, and Gln-296.

The protein belongs to the glycosyltransferase 28 family. MurG subfamily.

The protein localises to the cell inner membrane. It carries out the reaction di-trans,octa-cis-undecaprenyl diphospho-N-acetyl-alpha-D-muramoyl-L-alanyl-D-glutamyl-meso-2,6-diaminopimeloyl-D-alanyl-D-alanine + UDP-N-acetyl-alpha-D-glucosamine = di-trans,octa-cis-undecaprenyl diphospho-[N-acetyl-alpha-D-glucosaminyl-(1-&gt;4)]-N-acetyl-alpha-D-muramoyl-L-alanyl-D-glutamyl-meso-2,6-diaminopimeloyl-D-alanyl-D-alanine + UDP + H(+). It participates in cell wall biogenesis; peptidoglycan biosynthesis. Cell wall formation. Catalyzes the transfer of a GlcNAc subunit on undecaprenyl-pyrophosphoryl-MurNAc-pentapeptide (lipid intermediate I) to form undecaprenyl-pyrophosphoryl-MurNAc-(pentapeptide)GlcNAc (lipid intermediate II). The polypeptide is UDP-N-acetylglucosamine--N-acetylmuramyl-(pentapeptide) pyrophosphoryl-undecaprenol N-acetylglucosamine transferase (Christiangramia forsetii (strain DSM 17595 / CGMCC 1.15422 / KT0803) (Gramella forsetii)).